We begin with the raw amino-acid sequence, 178 residues long: Outer envelope pore protein 16-2, chloroplastic (178 aa).

A contains beta strands region spans residues 1-102; sequence MEKSGGRIVM…DALVKNTGKE (102 aa). Residues 103 to 119 traverse the membrane as a helical segment; the sequence is SLQWGLAAGLYSGITYG.

The protein belongs to the Tim17/Tim22/Tim23 family. Plastid outer envelope porin OEP16 (TC 1.B.30) subfamily. In terms of assembly, homodimer and oligomers in membrane. Detected in pollen and seeds. Present in leaves and cotyledons.

It is found in the plastid. The protein localises to the chloroplast outer membrane. In terms of biological role, voltage-dependent high-conductance channel with a slight cation-selectivity; selective for amino acids but excludes triosephosphates or uncharged sugars. Non-essential amino acid-selective channel protein and translocation pore for NADPH:protochlorophyllide oxidoreductase A (PORA) and possibly PORB. The polypeptide is Outer envelope pore protein 16-2, chloroplastic (OEP162) (Arabidopsis thaliana (Mouse-ear cress)).